A 245-amino-acid chain; its full sequence is Fibroblast growth factor 13 (245 aa).

A disordered region spans residues 1–36 (MAAAIASSLIRQKRQAREREKSNACKCVSSPSKGKT). The segment at 1–62 (MAAAIASSLI…GSKKRRRRRP (62 aa)) is mediates targeting to the nucleus. A mediates interaction with sodium channels region spans residues 67–201 (KGIVTKLYSR…AHFLPKPLKV (135 aa)). At Ser208 the chain carries Phosphoserine. Residues 213 to 245 (TEFSRSGSGTPTKSRSVSGVLNGGKSMSHNEST) are disordered. A compositionally biased stretch (polar residues) spans 215–245 (FSRSGSGTPTKSRSVSGVLNGGKSMSHNEST).

Belongs to the heparin-binding growth factors family. Interacts with SCN8A; regulates SCN8A activity. Interacts with SCN1A; may regulate SCN1A activity. Interacts with SCN5A; the interaction is direct and may regulate SNC5A density at membranes and function. May also interact with SCN2A and SCN11A. Interacts with MAPK8IP2; may regulate the MAPK8IP2 scaffolding activity. May be phosphorylated. In terms of tissue distribution, ubiquitously expressed. Predominantly expressed in the nervous system.

Its subcellular location is the nucleus. The protein localises to the cytoplasm. It is found in the cell projection. The protein resides in the filopodium. It localises to the growth cone. Its subcellular location is the dendrite. The protein localises to the cell membrane. It is found in the sarcolemma. Functionally, microtubule-binding protein which directly binds tubulin and is involved in both polymerization and stabilization of microtubules. Through its action on microtubules, may participate in the refinement of axons by negatively regulating axonal and leading processes branching. Plays a crucial role in neuron polarization and migration in the cerebral cortex and the hippocampus. Regulates voltage-gated sodium channel transport and function. May also play a role in MAPK signaling. Required for the development of axonal initial segment-targeting inhibitory GABAergic synapses made by chandelier neurons. The chain is Fibroblast growth factor 13 from Homo sapiens (Human).